Here is a 330-residue protein sequence, read N- to C-terminus: Endo-1,4-beta-xylanase (330 aa).

A GH10 domain is found at 2-330 (CSSIPSLREV…KPAFWRVVNI (329 aa)). Glutamate 133 serves as the catalytic Proton donor. Glutamate 240 acts as the Nucleophile in catalysis.

It belongs to the glycosyl hydrolase 10 (cellulase F) family. Cytoplasmic xylanase subfamily.

Its subcellular location is the cytoplasm. The enzyme catalyses Endohydrolysis of (1-&gt;4)-beta-D-xylosidic linkages in xylans.. The protein operates within glycan degradation; xylan degradation. In Geobacillus stearothermophilus (Bacillus stearothermophilus), this protein is Endo-1,4-beta-xylanase (xynA).